The sequence spans 201 residues: Ras-related protein Rab-1B (201 aa).

Methionine 1 is modified (N-acetylmethionine). 13 residues coordinate GTP: serine 17, glycine 18, valine 19, glycine 20, lysine 21, serine 22, cysteine 23, tyrosine 33, threonine 34, glutamate 35, serine 36, serine 39, and threonine 40. Residue serine 22 participates in Mg(2+) binding. Residues aspartate 30–phenylalanine 45 carry the Switch 1 motif. Residues threonine 40 and aspartate 63 each coordinate Mg(2+). The tract at residues threonine 64 to glycine 83 is switch 2 region; required for interaction with REP1/CHM. The Switch 2 motif lies at alanine 65–glycine 80. Residues glycine 66, asparagine 121, lysine 122, aspartate 124, serine 151, alanine 152, and lysine 153 each contribute to the GTP site. Positions methionine 173 to cysteine 201 are disordered. 2 S-geranylgeranyl cysteine lipidation sites follow: cysteine 200 and cysteine 201. A Cysteine methyl ester modification is found at cysteine 201.

The protein belongs to the small GTPase superfamily. Rab family. Interacts with MICAL1 and MICAL2. Interacts (in GTP-bound form) with MICALCL, MICAL1 and MILCAL3. Interacts with GDI1; the interaction requires the GDP-bound state. Interacts with CHM/REP1; the interaction requires the GDP-bound form and is necessary for prenylation by GGTase II. Interacts with RabGAP TBC1D20. Interacts (in GDP-bound form) with lipid phosphatase MTMR6 (via GRAM domain); the interaction regulates MTMR6 recruitment to the endoplasmic reticulum-Golgi intermediate compartment. Interacts (in GDP-bound form) with lipid phosphatase MTMR7. It depends on Mg(2+) as a cofactor. Prenylated; by GGTase II, only after interaction of the substrate with Rab escort protein 1 (REP1).

The protein localises to the cytoplasm. The protein resides in the membrane. It is found in the preautophagosomal structure membrane. It localises to the perinuclear region. It catalyses the reaction GTP + H2O = GDP + phosphate + H(+). Regulated by guanine nucleotide exchange factors (GEFs) which promote the exchange of bound GDP for free GTP. Regulated by GTPase activating proteins (GAPs) including TBC1D20 which increases the GTP hydrolysis activity. Inhibited by GDP dissociation inhibitors (GDIs). The small GTPases Rab are key regulators of intracellular membrane trafficking, from the formation of transport vesicles to their fusion with membranes. Rabs cycle between an inactive GDP-bound form and an active GTP-bound form that is able to recruit to membranes different set of downstream effectors directly responsible for vesicle formation, movement, tethering and fusion. Plays a role in the initial events of the autophagic vacuole development which take place at specialized regions of the endoplasmic reticulum. Regulates vesicular transport between the endoplasmic reticulum and successive Golgi compartments. Required to modulate the compacted morphology of the Golgi. Promotes the recruitment of lipid phosphatase MTMR6 to the endoplasmic reticulum-Golgi intermediate compartment. In Rattus norvegicus (Rat), this protein is Ras-related protein Rab-1B (Rab1b).